A 364-amino-acid polypeptide reads, in one-letter code: MESTDSSGGPPPPQPNLPPGFRFHPTDEELVVHYLKRKAASAPLPVAIIAEVDLYKFDPWELPAKASFGEQEWYFFSPRDRKYPNGARPNRAATSGYWKATGTDKPVLASDGNQKVGVKKALVFYSGKPPKGVKSDWIMHEYRLIENKPNNRPPGCDFGNKKNSLRLDDWVLCRIYKKNNASRHVDNDKDHDMIDYIFRKIPPSLSMAAASTGLHQHHHNVSRSMNFFPGKFSGGGYGIFSDGGNTSIYDGGGMINNIGTDSVDHDNNADVVGLNHASSSGPMMMANLKRTLPVPYWPVADEEQDASPSKRFHGVGGGGGDCSNMSSSMMEETPPLMQQQGGVLGDGLFRTTSYQLPGLNWYSS.

Residues 1–23 (MESTDSSGGPPPPQPNLPPGFRF) form a disordered region. The segment covering 9 to 18 (GPPPPQPNLP) has biased composition (pro residues). In terms of domain architecture, NAC spans 17–178 (LPPGFRFHPT…DWVLCRIYKK (162 aa)). The DNA-binding element occupies 116-184 (VGVKKALVFY…IYKKNNASRH (69 aa)).

Stamen specific, in anthers from stage 8. Expressed in the outer integument, but seems not expressed in the embryo at the torpedo stage.

It localises to the nucleus. Functionally, transcription factor of the NAC family. Together with NAC018/NARS2, regulates embryogenesis by regulating the development and degeneration of ovule integuments, a process required for intertissue communication between the embryo and the maternal integument. In Arabidopsis thaliana (Mouse-ear cress), this protein is NAC transcription factor 56.